A 210-amino-acid polypeptide reads, in one-letter code: Dof zinc finger protein DOF4.4 (210 aa).

The Dof-type zinc finger occupies R24 to R78. C26, C29, C51, and C54 together coordinate Zn(2+).

It localises to the nucleus. In terms of biological role, transcription factor that binds specifically to a 5'-AA[AG]G-3' consensus core sequence. In Arabidopsis thaliana (Mouse-ear cress), this protein is Dof zinc finger protein DOF4.4 (DOF4.4).